We begin with the raw amino-acid sequence, 344 residues long: Pyruvate dehydrogenase E1 component subunit alpha (344 aa).

Pyruvate-binding residues include histidine 55, tyrosine 81, arginine 82, alanine 130, isoleucine 132, aspartate 168, glycine 169, and asparagine 197. Thiamine diphosphate contacts are provided by tyrosine 81, arginine 82, alanine 130, isoleucine 132, aspartate 168, glycine 169, asparagine 197, and histidine 266. Aspartate 168 is a binding site for Mg(2+). Residue asparagine 197 participates in Mg(2+) binding.

In terms of assembly, heterodimer of an alpha and a beta chain. Thiamine diphosphate serves as cofactor. It depends on Mg(2+) as a cofactor.

The protein localises to the plastid. The protein resides in the chloroplast. The enzyme catalyses N(6)-[(R)-lipoyl]-L-lysyl-[protein] + pyruvate + H(+) = N(6)-[(R)-S(8)-acetyldihydrolipoyl]-L-lysyl-[protein] + CO2. In terms of biological role, the pyruvate dehydrogenase complex catalyzes the overall conversion of pyruvate to acetyl-CoA and CO(2). It contains multiple copies of three enzymatic components: pyruvate dehydrogenase (E1), dihydrolipoamide acetyltransferase (E2) and lipoamide dehydrogenase (E3). The polypeptide is Pyruvate dehydrogenase E1 component subunit alpha (pdhA) (Porphyra purpurea (Red seaweed)).